Reading from the N-terminus, the 344-residue chain is L-rhamnose-proton symporter (344 aa).

10 helical membrane-spanning segments follow: residues 4-24 (AITM…CFYA), 38-58 (WSVG…ALLL), 68-88 (FSLS…IGNI), 101-121 (MGIG…TPII), 137-157 (TLLG…AGQL), 175-195 (LVLA…MNAA), 214-234 (LPSY…FCFI), 259-279 (VLLS…YAWG), 290-310 (ISWM…GLVL), and 323-343 (VLSL…IGMA).

This sequence belongs to the L-rhamnose transporter (TC 2.A.7.6) family.

It localises to the cell inner membrane. It catalyses the reaction L-rhamnopyranose(in) + H(+)(in) = L-rhamnopyranose(out) + H(+)(out). In terms of biological role, uptake of L-rhamnose across the cytoplasmic membrane with the concomitant transport of protons into the cell (symport system). The protein is L-rhamnose-proton symporter of Escherichia coli O127:H6 (strain E2348/69 / EPEC).